The following is a 152-amino-acid chain: Deoxyuridine 5'-triphosphate nucleotidohydrolase (152 aa).

Substrate contacts are provided by residues 71 to 73 (RSG), N84, 88 to 90 (LID), and M98.

This sequence belongs to the dUTPase family. Mg(2+) serves as cofactor.

It carries out the reaction dUTP + H2O = dUMP + diphosphate + H(+). The protein operates within pyrimidine metabolism; dUMP biosynthesis; dUMP from dCTP (dUTP route): step 2/2. Its function is as follows. This enzyme is involved in nucleotide metabolism: it produces dUMP, the immediate precursor of thymidine nucleotides and it decreases the intracellular concentration of dUTP so that uracil cannot be incorporated into DNA. This chain is Deoxyuridine 5'-triphosphate nucleotidohydrolase, found in Shewanella halifaxensis (strain HAW-EB4).